The sequence spans 250 residues: Indole-3-glycerol phosphate synthase (250 aa).

The protein belongs to the TrpC family.

The enzyme catalyses 1-(2-carboxyphenylamino)-1-deoxy-D-ribulose 5-phosphate + H(+) = (1S,2R)-1-C-(indol-3-yl)glycerol 3-phosphate + CO2 + H2O. The protein operates within amino-acid biosynthesis; L-tryptophan biosynthesis; L-tryptophan from chorismate: step 4/5. The polypeptide is Indole-3-glycerol phosphate synthase (Picrophilus torridus (strain ATCC 700027 / DSM 9790 / JCM 10055 / NBRC 100828 / KAW 2/3)).